Consider the following 282-residue polypeptide: NADPH-dependent 7-cyano-7-deazaguanine reductase (282 aa).

Substrate is bound at residue 88–90 (IES). 90–91 (SK) lines the NADPH pocket. C190 functions as the Thioimide intermediate in the catalytic mechanism. The active-site Proton donor is the D197. 229–230 (HE) contributes to the substrate binding site. 258-259 (RG) serves as a coordination point for NADPH.

This sequence belongs to the GTP cyclohydrolase I family. QueF type 2 subfamily. Homodimer.

It is found in the cytoplasm. It catalyses the reaction 7-aminomethyl-7-carbaguanine + 2 NADP(+) = 7-cyano-7-deazaguanine + 2 NADPH + 3 H(+). Its pathway is tRNA modification; tRNA-queuosine biosynthesis. Catalyzes the NADPH-dependent reduction of 7-cyano-7-deazaguanine (preQ0) to 7-aminomethyl-7-deazaguanine (preQ1). This Escherichia coli O157:H7 protein is NADPH-dependent 7-cyano-7-deazaguanine reductase.